Reading from the N-terminus, the 569-residue chain is MTTKTSNETYGAGTVVDSEFSPLPAECERILRIFAARTPGFTKDEALLSGVNFHGDDLPCIPGPIKSQAVTAVLHAMVGIVGLEILHLRGVTTDNQIDIDVNHAGLYPATAALVDIDGVTGPEVIKLPTVPQWDKDRASNSPLVYRATAIYETADSGVWFQLHGSLDSWKVLALLGIGKDLDSEIRTNDAAYELIQERVRKYRAREIEQLVVEKGLSGSIVYSPEEWRQTEMGRSLSRHPLVNYKQKSHCATLAPASFPVLEDKRPLAGIKVVELTRIIAGAAAGAALASLGAEVIRVNSSKLKDYTPAQPSSLMAGKKTIDLDLEDPADHKKLMQLFEQADVILQGYRLGSLARRGFGLEAALELANKRGRGVVYVDENCYGPDGYYAERPGWQQVADAAAGSSYVMGQSFGFPKGQGVLPSLPISDMSTGILTALTIMCGIRDRAKFGGSYHGHASLTAYNMATLDSEVRLYQREVVQKISDKYEFPTWSSDVHVAPLYYSILDAWGKKSELIKDEKHYIHFSDSVFGSDLRVLGPVVRYDKEEYSPKWNSPPVPFCHHEFTMFSNQ.

Belongs to the CoA-transferase III family.

In terms of biological role, acyl-CoA transferase; part of the Fusarium detoxification of benzoxazolinone cluster 2 (FDB2) involved in the degradation of benzoxazolinones produced by the host plant. Maize, wheat, and rye produce the 2 benzoxazinone phytoanticipins 2,4-dihy-droxy-7-methoxy-1,4-benzoxazin-3-one (DIMBOA) and 2,4-dihydroxy-1,4-benzoxazin-3-one (DIBOA) that, due to their inherent instability once released, spontaneously degrade to the more stable corresponding benzoxazolinones, 6-methoxy-2-benzoxazolinone (MBOA) and 2-benzoxazolinone (BOA), respectively. The first step in the detoxification of benzoxazolinones involves the hydrolysis of the cyclic ester bond of benzoxazolinones by the FDB1 cluster gamma-lactamase MBL1 to aminophenols. MBL1 is able to convert BOA into 2-aminophenol (2-AP), as well as MBOA into 5-methoxy-2-aminophenol (2-AMP). The FDB2 cluster N-malonyltransferase FDB2/NAT1 then metabolizes aminophenols via N-malonylation to non-toxic malonamic acids. FDB2/NAT1 converts 2-AP into N-(2-hydroxyphenyl) malonamic acid (HPMA) and 2-AMP into N-(2-hydroxy-4-methoxyphenyl) malonamic acid (HMPMA). The duplicated dienlactone hydrolases DLH1 and DLH2 may provide redundant function for hydrolyzing the lactone moiety in the BOA molecule. The roles of the amidases an other enzymes encoded by the 2 FDB clusters have not been identified so far. This is Acyl-CoA transferase FVEG_12629 from Gibberella moniliformis (strain M3125 / FGSC 7600) (Maize ear and stalk rot fungus).